Here is a 383-residue protein sequence, read N- to C-terminus: Histidinol-phosphate aminotransferase (383 aa).

Lysine 240 is modified (N6-(pyridoxal phosphate)lysine).

Belongs to the class-II pyridoxal-phosphate-dependent aminotransferase family. Histidinol-phosphate aminotransferase subfamily. In terms of assembly, homodimer. Requires pyridoxal 5'-phosphate as cofactor.

The enzyme catalyses L-histidinol phosphate + 2-oxoglutarate = 3-(imidazol-4-yl)-2-oxopropyl phosphate + L-glutamate. The protein operates within amino-acid biosynthesis; L-histidine biosynthesis; L-histidine from 5-phospho-alpha-D-ribose 1-diphosphate: step 7/9. This Oleidesulfovibrio alaskensis (strain ATCC BAA-1058 / DSM 17464 / G20) (Desulfovibrio alaskensis) protein is Histidinol-phosphate aminotransferase.